A 490-amino-acid chain; its full sequence is ATP synthase subunit beta, chloroplastic (490 aa).

170 to 177 is a binding site for ATP; it reads GGAGVGKT.

This sequence belongs to the ATPase alpha/beta chains family. As to quaternary structure, F-type ATPases have 2 components, CF(1) - the catalytic core - and CF(0) - the membrane proton channel. CF(1) has five subunits: alpha(3), beta(3), gamma(1), delta(1), epsilon(1). CF(0) has four main subunits: a(1), b(1), b'(1) and c(9-12).

Its subcellular location is the plastid. The protein localises to the chloroplast thylakoid membrane. The enzyme catalyses ATP + H2O + 4 H(+)(in) = ADP + phosphate + 5 H(+)(out). Produces ATP from ADP in the presence of a proton gradient across the membrane. The catalytic sites are hosted primarily by the beta subunits. This chain is ATP synthase subunit beta, chloroplastic, found in Calystegia sepium (Hedge bindweed).